The following is a 632-amino-acid chain: MAU2 chromatid cohesion factor homolog (632 aa).

TPR repeat units lie at residues 453 to 486 and 493 to 526; these read GGFYYVQGLHAFHKNSFHEAKRFLRETLKMANAE and SCSLVLLSHVFLSIGNSKESMNMVTPAMQLASKI.

It belongs to the SCC4/mau-2 family. As to quaternary structure, interacts with Nipped-B to form the cohesin loading complex.

It is found in the nucleus. Its subcellular location is the nucleoplasm. In terms of biological role, required for association of the cohesin complex with chromatin during interphase. Plays a role in sister chromatid cohesion and normal progression through prometaphase. In Drosophila yakuba (Fruit fly), this protein is MAU2 chromatid cohesion factor homolog.